The sequence spans 310 residues: Deoxyribonuclease gamma (310 aa).

An N-terminal signal peptide occupies residues methionine 1 to serine 25. Positions lysine 40 to arginine 56 match the Bipartite nuclear localization signal motif. Catalysis depends on residues glutamate 105 and histidine 160. A disulfide bridge connects residues cysteine 199 and cysteine 236. Residues serine 289–serine 310 form a not required for free DNA-nuclease activity but required for activity towards liposome-coated DNA region. The short motif at leucine 301–glycine 307 is the Nuclear localization signal element.

It belongs to the DNase I family. As to quaternary structure, monomer. Requires Ca(2+) as cofactor. Mg(2+) is required as a cofactor. In terms of processing, seems to be synthesized as an inactive precursor protein and converted into an active mature enzyme by removal of the N-terminal precursor peptide during apoptosis. Poly-ADP-ribosylated by PARP1. ADP-ribosylation negatively regulates enzymatic activity during apoptosis. In terms of tissue distribution, detected at high levels in spleen, lymph nodes, thymus and liver. Observed also in kidney and testis, but not in brain or heart.

Its subcellular location is the nucleus. The protein resides in the secreted. Inhibited by zinc. Has DNA hydrolytic activity. Is capable of both single- and double-stranded DNA cleavage, producing DNA fragments with 3'-OH ends. Can cleave chromatin to nucleosomal units and cleaves nucleosomal and liposome-coated DNA. Acts in internucleosomal DNA fragmentation (INDF) during apoptosis and necrosis. The role in apoptosis includes myogenic and neuronal differentiation, and BCR-mediated clonal deletion of self-reactive B cells. Is active on chromatin in apoptotic cell-derived membrane-coated microparticles and thus suppresses anti-DNA autoimmunity. Together with DNASE1, plays a key role in degrading neutrophil extracellular traps (NETs). NETs are mainly composed of DNA fibers and are released by neutrophils to bind pathogens during inflammation. Degradation of intravascular NETs by DNASE1 and DNASE1L3 is required to prevent formation of clots that obstruct blood vessels and cause organ damage following inflammation. The polypeptide is Deoxyribonuclease gamma (Dnase1l3) (Rattus norvegicus (Rat)).